The primary structure comprises 151 residues: Transcriptional regulator MraZ (151 aa).

2 consecutive SpoVT-AbrB domains span residues 5-51 (AHEL…PVAE) and 81-124 (AEIL…GREQ).

Belongs to the MraZ family. In terms of assembly, forms oligomers.

The protein resides in the cytoplasm. The protein localises to the nucleoid. The chain is Transcriptional regulator MraZ from Neisseria gonorrhoeae (strain ATCC 700825 / FA 1090).